Consider the following 903-residue polypeptide: Alanine--tRNA ligase (903 aa).

Zn(2+) contacts are provided by His-581, His-585, Cys-693, and His-697.

This sequence belongs to the class-II aminoacyl-tRNA synthetase family. It depends on Zn(2+) as a cofactor.

The protein resides in the cytoplasm. The enzyme catalyses tRNA(Ala) + L-alanine + ATP = L-alanyl-tRNA(Ala) + AMP + diphosphate. Its function is as follows. Catalyzes the attachment of alanine to tRNA(Ala) in a two-step reaction: alanine is first activated by ATP to form Ala-AMP and then transferred to the acceptor end of tRNA(Ala). Also edits incorrectly charged Ser-tRNA(Ala) and Gly-tRNA(Ala) via its editing domain. The protein is Alanine--tRNA ligase of Psychrobacter sp. (strain PRwf-1).